A 166-amino-acid polypeptide reads, in one-letter code: 3-isopropylmalate dehydratase small subunit 2 (166 aa).

This sequence belongs to the LeuD family. LeuD type 2 subfamily. As to quaternary structure, heterodimer of LeuC and LeuD.

It catalyses the reaction (2R,3S)-3-isopropylmalate = (2S)-2-isopropylmalate. Its pathway is amino-acid biosynthesis; L-leucine biosynthesis; L-leucine from 3-methyl-2-oxobutanoate: step 2/4. Catalyzes the isomerization between 2-isopropylmalate and 3-isopropylmalate, via the formation of 2-isopropylmaleate. This Thermotoga maritima (strain ATCC 43589 / DSM 3109 / JCM 10099 / NBRC 100826 / MSB8) protein is 3-isopropylmalate dehydratase small subunit 2 (leuD2).